Consider the following 491-residue polypeptide: Cell division control protein 1 (491 aa).

The segment at 1 to 33 (MVYRNRSKSVLSTHSKKSDDKAHYKSRSKKKSK) is disordered. Topologically, residues 1–39 (MVYRNRSKSVLSTHSKKSDDKAHYKSRSKKKSKSRSKKR) are cytoplasmic. Over residues 24–33 (YKSRSKKKSK) the composition is skewed to basic residues. A helical membrane pass occupies residues 40–60 (LRIYWRYISIVWILWLGLISY). Residues 61–391 (YESVVVKRAM…LCYMPDPYKA (331 aa)) are Extracellular-facing. A divalent metal cation is bound by residues Asp95, Asp144, Asn183, and His323. The chain crosses the membrane as a helical span at residues 392-412 (IRMYLWGLLFSAAFIAYMHFF). Topologically, residues 413-465 (PKSFNNRVATIMNRVFTRPDGNTSDLPLPTSISKSKSKKSLTHSKYAVNDTRS) are cytoplasmic. A helical transmembrane segment spans residues 466-486 (IKQFLVNAIVLFVSVMPIFIY). The Extracellular portion of the chain corresponds to 487–491 (FYTVV).

The protein belongs to the metallophosphoesterase superfamily. MPPE1 family. It depends on a divalent metal cation as a cofactor.

The protein localises to the membrane. Probable metallophosphoesterase which may participate in recombinational repair of double -strand breaks. The protein is Cell division control protein 1 (CDC1) of Saccharomyces cerevisiae (strain ATCC 204508 / S288c) (Baker's yeast).